Consider the following 434-residue polypeptide: MSIEKIWAREILDSRGNPTVEVDLYTAKGLFRAAVPSGASTGIYEALELRDGDKQRYLGKGVLKAVDHINSRIAPALISSGISVVEQEKLDNLMLELDGTENKSKFGANAILGVSLAVCKAGAAERDLPLYRHIAQLAGNSDLILPVPAFNVINGGSHAGNKLAMQEFMILPVGAESFRDAMRLGAEVYHTLKGVIKDKYGKDATNVGDEGGFAPNILENSEALELVKEAIDKAGYTEKMVIGMDVAASEFYRDGKYDLDFKSPADPSRYITGDQLGALYQDFVRNYPVVSIEDPFDQDDWAAWSKFTANVGIQIVGDDLTVTNPKRIERAVEEKACNCLLLKVNQIGSVTEAIQACKLAQENGWGVMVSHRSGETEDTFIADLVVGLCTGQIKTGAPCRSERLAKYNQLMRIEEELGDEARFAGHNFRNPSVL.

At serine 2 the chain carries N-acetylserine. Residue lysine 5 is modified to N6-acetyllysine. Threonine 26 bears the Phosphothreonine mark. Serine 40 contributes to the Mg(2+) binding site. Residue tyrosine 44 is modified to Phosphotyrosine. The residue at position 60 (lysine 60) is an N6-acetyllysine; alternate. Position 60 is an N6-succinyllysine; alternate (lysine 60). Lysine 64 is subject to N6-acetyllysine. N6-acetyllysine; alternate is present on lysine 89. Residue lysine 89 is modified to N6-succinyllysine; alternate. Substrate is bound by residues histidine 158 and glutamate 167. N6-acetyllysine occurs at positions 193, 197, and 199. Lysine 202 is modified (N6-acetyllysine; alternate). A Glycyl lysine isopeptide (Lys-Gly) (interchain with G-Cter in SUMO2); alternate cross-link involves residue lysine 202. Glutamate 210 acts as the Proton donor in catalysis. Lysine 228 and lysine 233 each carry N6-acetyllysine; alternate. Residue lysine 228 is modified to N6-succinyllysine; alternate. Lysine 233 carries the N6-(2-hydroxyisobutyryl)lysine; alternate modification. Aspartate 245 is a binding site for Mg(2+). Lysine 256 carries the post-translational modification N6-acetyllysine. A Phosphoserine modification is found at serine 263. Tyrosine 287 is modified (phosphotyrosine). The residue at position 291 (serine 291) is a Phosphoserine. 2 residues coordinate Mg(2+): glutamate 293 and aspartate 318. Substrate-binding residues include glutamate 293 and aspartate 318. N6-acetyllysine is present on residues lysine 335 and lysine 343. Lysine 343 functions as the Proton acceptor in the catalytic mechanism. Substrate is bound by residues 370-373 (SHRS) and lysine 394. At lysine 406 the chain carries N6-acetyllysine.

It belongs to the enolase family. Mammalian enolase is composed of 3 isozyme subunits, alpha, beta and gamma, which can form homodimers or heterodimers which are cell-type and development-specific. Mg(2+) serves as cofactor. As to expression, skeletal muscle (at protein level). The alpha/alpha homodimer is expressed in embryo and in most adult tissues. The alpha/beta heterodimer and the beta/beta homodimer are found in striated muscle, and the alpha/gamma heterodimer and the gamma/gamma homodimer in neurons.

It localises to the cytoplasm. Its subcellular location is the cell membrane. The enzyme catalyses (2R)-2-phosphoglycerate = phosphoenolpyruvate + H2O. It functions in the pathway carbohydrate degradation; glycolysis; pyruvate from D-glyceraldehyde 3-phosphate: step 4/5. Functionally, has neurotrophic and neuroprotective properties on a broad spectrum of central nervous system (CNS) neurons. Binds, in a calcium-dependent manner, to cultured neocortical neurons and promotes cell survival. The polypeptide is Gamma-enolase (Eno2) (Mus musculus (Mouse)).